The following is a 300-amino-acid chain: Solute carrier family 25 member 35 (300 aa).

Solcar repeat units follow at residues 1-90 (MDFL…AESR), 100-193 (HSPV…IKDL), and 203-294 (QSWK…LRSF). A run of 6 helical transmembrane segments spans residues 38 to 58 (TYQRHYRNVFHAFFTIGKVDG), 59 to 79 (LAALQKGLGPALLYQFLMNGI), 91 to 119 (GYLHTNEGTHSPVRSAAAGALAGVMGAYL), 169 to 190 (AVGGLPRVVIGSSTQLCTFSSI), 205 to 225 (WKVALAAAMVSGVAIVVAMTP), and 277 to 300 (LGPHTILSLFFWDQLRSFYNTYAK).

The protein belongs to the mitochondrial carrier (TC 2.A.29) family.

It is found in the mitochondrion inner membrane. It catalyses the reaction a dicarboxylate(in) + sulfate(out) = a dicarboxylate(out) + sulfate(in). In terms of biological role, putative antiporter that exchanges dicarboxylates and sulfur oxoanions across the inner membrane of mitochondria. The polypeptide is Solute carrier family 25 member 35 (Slc25a35) (Mus musculus (Mouse)).